Here is a 665-residue protein sequence, read N- to C-terminus: Macrolide export ATP-binding/permease protein MacB (665 aa).

An ABC transporter domain is found at 17 to 255 (MQVKGLIREF…VAQFSSIIDK (239 aa)). An ATP-binding site is contributed by 53–60 (GQSGSGKS). Helical transmembrane passes span 287–307 (LLTM…VGLG), 544–564 (IAII…LVSV), 588–608 (FLIE…GMAF), and 630–650 (SIIA…FLPA).

The protein belongs to the ABC transporter superfamily. Macrolide exporter (TC 3.A.1.122) family. Homodimer. Part of the tripartite efflux system MacAB-TolC, which is composed of an inner membrane transporter, MacB, a periplasmic membrane fusion protein, MacA, and an outer membrane component, TolC. The complex forms a large protein conduit and can translocate molecules across both the inner and outer membranes. Interacts with MacA.

It localises to the cell inner membrane. In terms of biological role, part of the tripartite efflux system MacAB-TolC. MacB is a non-canonical ABC transporter that contains transmembrane domains (TMD), which form a pore in the inner membrane, and an ATP-binding domain (NBD), which is responsible for energy generation. Confers resistance against macrolides. The polypeptide is Macrolide export ATP-binding/permease protein MacB (Psychrobacter arcticus (strain DSM 17307 / VKM B-2377 / 273-4)).